Consider the following 534-residue polypeptide: Protein BFR2 (534 aa).

Residues 27-148 form a disordered region; the sequence is ENASLFQHNE…ETEEAQQKRH (122 aa). Phosphoserine occurs at positions 41 and 44. Residues 52 to 77 show a composition bias toward basic and acidic residues; the sequence is EETKKAHYLEVEKSKLRAEKGLELND. Residues 86–161 are a coiled coil; that stretch reads SRQALYEEVS…KLIQQETKQA (76 aa). 2 stretches are compositionally biased toward acidic residues: residues 93-114 and 121-142; these read EVSENEDEEEEEEEEEEKEEDA and SEDEEVEIDEEESDADGGETEE. Phosphoserine is present on residues serine 366, serine 372, and serine 379.

Belongs to the AATF family.

The protein resides in the nucleus. The protein localises to the nucleolus. Involved in endoplasmic reticulum to Golgi transport. Involved in a protein-transport step blocked by brefeldin A, which disrupts the Golgi apparatus and its incoming protein flux. May also be involved for mass growth or cell proliferation. The polypeptide is Protein BFR2 (BFR2) (Saccharomyces cerevisiae (strain ATCC 204508 / S288c) (Baker's yeast)).